The chain runs to 152 residues: Acidic phospholipase A2 57 (152 aa).

The signal sequence occupies residues 1-21 (MYPAHLLGLLAVCVSLLGAAS). The propeptide occupies 22–27 (IPPLPL). 7 disulfides stabilise this stretch: cysteine 38–cysteine 104, cysteine 54–cysteine 151, cysteine 56–cysteine 72, cysteine 71–cysteine 132, cysteine 78–cysteine 125, cysteine 88–cysteine 118, and cysteine 111–cysteine 123. Ca(2+) contacts are provided by tyrosine 55, glycine 57, and glycine 59. The active site involves histidine 75. Aspartate 76 serves as a coordination point for Ca(2+). Aspartate 126 is an active-site residue.

It belongs to the phospholipase A2 family. Group I subfamily. D49 sub-subfamily. Ca(2+) is required as a cofactor. As to expression, expressed by the venom gland.

It localises to the secreted. The catalysed reaction is a 1,2-diacyl-sn-glycero-3-phosphocholine + H2O = a 1-acyl-sn-glycero-3-phosphocholine + a fatty acid + H(+). Functionally, PLA2 catalyzes the calcium-dependent hydrolysis of the 2-acyl groups in 3-sn-phosphoglycerides. This chain is Acidic phospholipase A2 57, found in Hydrophis hardwickii (Hardwick's spine-bellied seasnake).